The primary structure comprises 476 residues: UDP-N-acetylmuramate--L-alanine ligase (476 aa).

Position 125–131 (125–131 (GTHGKTT)) interacts with ATP.

Belongs to the MurCDEF family.

It is found in the cytoplasm. The catalysed reaction is UDP-N-acetyl-alpha-D-muramate + L-alanine + ATP = UDP-N-acetyl-alpha-D-muramoyl-L-alanine + ADP + phosphate + H(+). It participates in cell wall biogenesis; peptidoglycan biosynthesis. Cell wall formation. The chain is UDP-N-acetylmuramate--L-alanine ligase from Histophilus somni (strain 129Pt) (Haemophilus somnus).